Consider the following 400-residue polypeptide: CinA-like protein (400 aa).

The protein belongs to the CinA family.

The sequence is that of CinA-like protein from Escherichia coli (strain SMS-3-5 / SECEC).